Consider the following 236-residue polypeptide: 2,3,4,5-tetrahydropyridine-2,6-dicarboxylate N-acetyltransferase (236 aa).

The protein belongs to the transferase hexapeptide repeat family. DapH subfamily.

The catalysed reaction is (S)-2,3,4,5-tetrahydrodipicolinate + acetyl-CoA + H2O = L-2-acetamido-6-oxoheptanedioate + CoA. It participates in amino-acid biosynthesis; L-lysine biosynthesis via DAP pathway; LL-2,6-diaminopimelate from (S)-tetrahydrodipicolinate (acetylase route): step 1/3. Its function is as follows. Catalyzes the transfer of an acetyl group from acetyl-CoA to tetrahydrodipicolinate. In Lactobacillus acidophilus (strain ATCC 700396 / NCK56 / N2 / NCFM), this protein is 2,3,4,5-tetrahydropyridine-2,6-dicarboxylate N-acetyltransferase.